The primary structure comprises 346 residues: D-fructose 1,6-bisphosphatase class 2/sedoheptulose 1,7-bisphosphatase (346 aa).

Residues D33, E57, D97, and E100 each contribute to the Mn(2+) site. Residues 100 to 102 (EGT), Y131, 176 to 178 (RDR), and 198 to 200 (DGD) contribute to the substrate site. E225 is a Mn(2+) binding site.

It belongs to the FBPase class 2 family. In terms of assembly, homotetramer. Mn(2+) serves as cofactor.

The enzyme catalyses beta-D-fructose 1,6-bisphosphate + H2O = beta-D-fructose 6-phosphate + phosphate. The catalysed reaction is D-sedoheptulose 1,7-bisphosphate + H2O = D-sedoheptulose 7-phosphate + phosphate. It participates in carbohydrate biosynthesis; Calvin cycle. In terms of biological role, catalyzes the hydrolysis of fructose 1,6-bisphosphate (Fru 1,6-P2) and sedoheptulose 1,7-bisphosphate (Sed 1,7-P2) to fructose 6-phosphate and sedoheptulose 7-phosphate, respectively. In Gloeobacter violaceus (strain ATCC 29082 / PCC 7421), this protein is D-fructose 1,6-bisphosphatase class 2/sedoheptulose 1,7-bisphosphatase.